Here is a 188-residue protein sequence, read N- to C-terminus: GTP cyclohydrolase 1 (188 aa).

Zn(2+) is bound by residues Cys-75, His-78, and Cys-146.

Belongs to the GTP cyclohydrolase I family. As to quaternary structure, toroid-shaped homodecamer, composed of two pentamers of five dimers.

It catalyses the reaction GTP + H2O = 7,8-dihydroneopterin 3'-triphosphate + formate + H(+). The protein operates within cofactor biosynthesis; 7,8-dihydroneopterin triphosphate biosynthesis; 7,8-dihydroneopterin triphosphate from GTP: step 1/1. The polypeptide is GTP cyclohydrolase 1 (Hahella chejuensis (strain KCTC 2396)).